Here is a 404-residue protein sequence, read N- to C-terminus: Cysteine desulfurase IscS (404 aa).

Pyridoxal 5'-phosphate is bound by residues 75–76 (AT), asparagine 155, glutamine 183, and 203–205 (SGH). Lysine 206 bears the N6-(pyridoxal phosphate)lysine mark. Threonine 243 lines the pyridoxal 5'-phosphate pocket. Residue cysteine 328 is the Cysteine persulfide intermediate of the active site. Residue cysteine 328 participates in [2Fe-2S] cluster binding.

This sequence belongs to the class-V pyridoxal-phosphate-dependent aminotransferase family. NifS/IscS subfamily. Homodimer. Forms a heterotetramer with IscU, interacts with other sulfur acceptors. It depends on pyridoxal 5'-phosphate as a cofactor.

The protein resides in the cytoplasm. It carries out the reaction (sulfur carrier)-H + L-cysteine = (sulfur carrier)-SH + L-alanine. It participates in cofactor biosynthesis; iron-sulfur cluster biosynthesis. Functionally, master enzyme that delivers sulfur to a number of partners involved in Fe-S cluster assembly, tRNA modification or cofactor biosynthesis. Catalyzes the removal of elemental sulfur and selenium atoms from cysteine and selenocysteine to produce alanine. Functions as a sulfur delivery protein for Fe-S cluster synthesis onto IscU, an Fe-S scaffold assembly protein, as well as other S acceptor proteins. Also functions as a selenium delivery protein in the pathway for the biosynthesis of selenophosphate. The protein is Cysteine desulfurase IscS of Salmonella schwarzengrund (strain CVM19633).